Consider the following 92-residue polypeptide: Small ribosomal subunit protein uS19 (92 aa).

It belongs to the universal ribosomal protein uS19 family.

Functionally, protein S19 forms a complex with S13 that binds strongly to the 16S ribosomal RNA. This is Small ribosomal subunit protein uS19 from Rickettsia felis (strain ATCC VR-1525 / URRWXCal2) (Rickettsia azadi).